The primary structure comprises 64 residues: Large ribosomal subunit protein bL35 (64 aa).

The span at 1–28 (MPKMKTKSGAAKRFKKTAGGLKHKHAFK) shows a compositional bias: basic residues. A disordered region spans residues 1-64 (MPKMKTKSGA…ARVERSLRLR (64 aa)). Over residues 53–64 (DVARVERSLRLR) the composition is skewed to basic and acidic residues.

Belongs to the bacterial ribosomal protein bL35 family.

This is Large ribosomal subunit protein bL35 from Pseudomonas aeruginosa (strain LESB58).